The following is a 626-amino-acid chain: ABC transporter G family member 8 (626 aa).

Positions 56 to 300 constitute an ABC transporter domain; that stretch reads VNLDNKTENS…SLGYPCPNNT (245 aa). 90–97 provides a ligand contact to ATP; the sequence is GPSGSGKS. The 249-residue stretch at 373–621 folds into the ABC transmembrane type-2 domain; the sequence is GNALSRVITA…SLSYFALHFL (249 aa). 7 helical membrane passes run 376-396, 409-429, 447-467, 485-505, 515-535, 543-563, and 600-620; these read LSRVITAIVIGALFGSCFAGL, TLFFLTTGLMLSPFSMITLFL, FPYFLSMITVELTIEFFVTLV, FFFAVLVYSFIHSLSTFFISS, LTFSYASSLSVVFMLFAGFYV, AFGWLHWVNPAFYGYSSVVIN, and FGVLVAWATFFYSLSYFALHF.

This sequence belongs to the ABC transporter superfamily. ABCG family. Eye pigment precursor importer (TC 3.A.1.204) subfamily.

It localises to the membrane. This Dictyostelium discoideum (Social amoeba) protein is ABC transporter G family member 8 (abcG8).